A 364-amino-acid polypeptide reads, in one-letter code: tRNA N6-adenosine threonylcarbamoyltransferase (364 aa).

Fe cation-binding residues include His-115 and His-119. Substrate contacts are provided by residues 137–141, Asp-170, Gly-183, and Asn-288; that span reads LVSGG. Position 316 (Asp-316) interacts with Fe cation.

This sequence belongs to the KAE1 / TsaD family. Fe(2+) serves as cofactor.

The protein resides in the cytoplasm. The catalysed reaction is L-threonylcarbamoyladenylate + adenosine(37) in tRNA = N(6)-L-threonylcarbamoyladenosine(37) in tRNA + AMP + H(+). In terms of biological role, required for the formation of a threonylcarbamoyl group on adenosine at position 37 (t(6)A37) in tRNAs that read codons beginning with adenine. Is involved in the transfer of the threonylcarbamoyl moiety of threonylcarbamoyl-AMP (TC-AMP) to the N6 group of A37, together with TsaE and TsaB. TsaD likely plays a direct catalytic role in this reaction. The protein is tRNA N6-adenosine threonylcarbamoyltransferase of Bartonella bacilliformis (strain ATCC 35685 / KC583 / Herrer 020/F12,63).